The sequence spans 385 residues: Protein pelota homolog (385 aa).

The protein belongs to the eukaryotic release factor 1 family. Pelota subfamily. In terms of assembly, component of the Pelota-HBS1L complex, also named Dom34-Hbs1 complex, composed of PELO and HBS1L. The cofactor is a divalent metal cation.

The protein resides in the cytoplasm. Component of the Pelota-HBS1L complex, a complex that recognizes stalled ribosomes and triggers the No-Go Decay (NGD) pathway. In the Pelota-HBS1L complex, PELO recognizes ribosomes stalled at the 3' end of an mRNA and engages stalled ribosomes by destabilizing mRNA in the mRNA channel. Following mRNA extraction from stalled ribosomes by the SKI complex, the Pelota-HBS1L complex promotes recruitment of ABCE1, which drives the disassembly of stalled ribosomes, followed by degradation of damaged mRNAs as part of the NGD pathway. The chain is Protein pelota homolog (pelo) from Danio rerio (Zebrafish).